Here is a 212-residue protein sequence, read N- to C-terminus: Glycerol-3-phosphate acyltransferase (212 aa).

The next 5 membrane-spanning stretches (helical) occupy residues 3–23 (LILLIIAAYLLGSIPTGLWIG), 69–89 (LLPMWLGVTHISPLLFGFFAI), 110–130 (AGILLGFAPFYLIFLLFIFFF), 143–163 (VIAASIAIITVLIFPALHFLL), and 165–185 (DYDFLFVLIVISAGSLIIIRH).

This sequence belongs to the PlsY family. In terms of assembly, probably interacts with PlsX.

It is found in the cell membrane. It catalyses the reaction an acyl phosphate + sn-glycerol 3-phosphate = a 1-acyl-sn-glycero-3-phosphate + phosphate. The protein operates within lipid metabolism; phospholipid metabolism. Catalyzes the transfer of an acyl group from acyl-phosphate (acyl-PO(4)) to glycerol-3-phosphate (G3P) to form lysophosphatidic acid (LPA). This enzyme utilizes acyl-phosphate as fatty acyl donor, but not acyl-CoA or acyl-ACP. The polypeptide is Glycerol-3-phosphate acyltransferase (Streptococcus mutans serotype c (strain ATCC 700610 / UA159)).